A 151-amino-acid chain; its full sequence is Deoxyuridine 5'-triphosphate nucleotidohydrolase (151 aa).

Residues Arg-70 to Gly-72, Asn-83, Leu-87 to Asp-89, and Met-97 each bind substrate.

This sequence belongs to the dUTPase family. Homotrimer. It depends on Mg(2+) as a cofactor.

It carries out the reaction dUTP + H2O = dUMP + diphosphate + H(+). Its pathway is pyrimidine metabolism; dUMP biosynthesis; dUMP from dCTP (dUTP route): step 2/2. Functionally, this enzyme is involved in nucleotide metabolism: it produces dUMP, the immediate precursor of thymidine nucleotides and it decreases the intracellular concentration of dUTP so that uracil cannot be incorporated into DNA. In Escherichia fergusonii (strain ATCC 35469 / DSM 13698 / CCUG 18766 / IAM 14443 / JCM 21226 / LMG 7866 / NBRC 102419 / NCTC 12128 / CDC 0568-73), this protein is Deoxyuridine 5'-triphosphate nucleotidohydrolase.